Reading from the N-terminus, the 211-residue chain is Transcription antitermination protein NusB (211 aa).

Residues 152–211 (PAKKERVANPFPSTPPKKPENVPNPFSTPFKKNSSEPIRNPFEGNKSPQPPQKTLRRKKK) form a disordered region. A compositionally biased stretch (polar residues) spans 175-188 (NPFSTPFKKNSSEP).

It belongs to the NusB family.

In terms of biological role, involved in transcription antitermination. Required for transcription of ribosomal RNA (rRNA) genes. Binds specifically to the boxA antiterminator sequence of the ribosomal RNA (rrn) operons. This is Transcription antitermination protein NusB from Chloroherpeton thalassium (strain ATCC 35110 / GB-78).